We begin with the raw amino-acid sequence, 826 residues long: MKVNHTTACGTQPFDKTYSLGYQVHHEDWSPYPRVNRLRQAFLDRPYDIDVERLRLVTEAYQKHEDAPRKLKCARAFENILLNTKLYIYDEDLILGEIAAPAKASPIYPEFSVNWIINEILHSPFEERANDQFYIRNDEERKEIVELCRYWEGKTVDDLINSRLEIDQTKGSEVGEKIFQTNLYHYAGAGHLAIDYARLMAVGYNGLIDNAQAGLEKLSKRDPEYGDKRDFYTAMIIELEAAKKYIARYAKLAQESAEKEENPQRKQELETMALNCQQIAGGVPQTFWQALQLFNFATTLIQIESNGHSISYGRMDQWLYPWFAADMKNNTITKEFALELIEVQYVKMNNPTKLKDKGTVAVRNGRGFGGESLTLGGVDREGNDATNDLTMLMLEGSAHTRMMNPWVCVRMHENTPYELKIKTVECIRAGYGHPKLFNDAPSIKGMMRKGMTLEEARDYCVVGCVELDLAGKEYGWHDAAYVNTPKMMEMVVNGGRSLSTGEQLGPDTGSLDTYKSFDEVLASVDQQFEYWTDQMCSSLNIIDNAHRELKPVPYVSAFYEDCMISGKDLTEGGAKYNGIAPQAAGMATCADSLATIKQLVFDEKRYSGAEMLQAVKDNWVGHEKLYALVNSSKVRHYGNDDDYADDLFKFMFECYCRHISGRKTPRGGEFSPGVYSVNANVGMGLNTNASIDGRKKFEPISDNMGPVHTDGGSHDICGPTALVNSLTKVDHSLATNGTLMNLRFPQEAVAGVEGRDNLLSFIDEYIAKQAMHVQFNIMSSATMRAAQKKPEDYKDMLVRVAGYSAYFVELGKPLQKDLIQRTELHF.

Residues 33–695 enclose the PFL domain; sequence PRVNRLRQAF…NTNASIDGRK (663 aa). The Cysteine radical intermediate role is filled by C464. The Proton acceptor role is filled by E466. The region spanning 706 to 826 is the Glycine radical domain; it reads PVHTDGGSHD…DLIQRTELHF (121 aa). G802 carries the glycine radical modification.

This sequence belongs to the glycyl radical enzyme (GRE) family. Requires the activating protein HpfH to generate the key active site glycyl radical on Gly-802 that is involved in catalysis.

It carries out the reaction (2S)-3-sulfopropanediol = 3-oxopropane-1-sulfonate + H2O. It participates in organosulfur degradation; alkanesulfonate degradation. Its function is as follows. Involved in the degradation of the organosulfur compound 2(S)-dihydroxypropanesulfonate (DHPS). Catalyzes the radical-mediated dehydration of DHPS to produce 3-sulfopropionaldehyde (3-oxopropane-1-sulfonate). The polypeptide is (2S)-3-sulfopropanediol dehydratase (Klebsiella oxytoca).